Consider the following 37-residue polypeptide: Mastoparan-VT (37 aa).

The propeptide occupies 1–22 (EALADPIADPVAGPNPEADPEA). AXPX repeat units lie at residues 4–7 (ADPI), 8–11 (ADPV), 12–15 (AGPN), and 18–21 (ADPE). Leucine amide is present on leucine 36.

This sequence belongs to the MCD family. Mastoparan subfamily. Expressed by the venom gland.

The protein localises to the secreted. It is found in the target cell membrane. Functionally, antimicrobial peptide with potent activity against both Gram-positive (S.aureus MIC=50 ug/ml, and B.subtilis MIC=25 ug/ml) and Gram-negative bacteria (P.aeruginosa MIC=25 ug/ml, E.coli MIC=3-50 ug/ml, K.pneumoniae MIC=25 ug/ml). Exhibits little hemolytic activity on human erythrocytes. This is Mastoparan-VT from Vespa tropica (Greater banded hornet).